The primary structure comprises 749 residues: Chitin synthase G (749 aa).

The next 5 helical transmembrane spans lie at 40–60 (CVGE…PLPP), 73–93 (VLQW…WLFC), 421–441 (FMQN…ISII), 451–471 (PVGF…YFGI), and 483–503 (LMFI…IFTA). The tract at residues 683–749 (IESGSGIPSG…RRYMQPEQMV (67 aa)) is disordered. The span at 697-718 (LSSSVPQSGMQQSRAVPGNMSQ) shows a compositional bias: polar residues. Asparagine 715 carries an N-linked (GlcNAc...) asparagine glycan. The span at 728–742 (YTKRPSRIPRQKRRY) shows a compositional bias: basic residues.

This sequence belongs to the chitin synthase family. Class VI subfamily.

It is found in the cell membrane. It carries out the reaction [(1-&gt;4)-N-acetyl-beta-D-glucosaminyl](n) + UDP-N-acetyl-alpha-D-glucosamine = [(1-&gt;4)-N-acetyl-beta-D-glucosaminyl](n+1) + UDP + H(+). In terms of biological role, polymerizes chitin, a structural polymer of the cell wall and septum, by transferring the sugar moiety of UDP-GlcNAc to the non-reducing end of the growing chitin polymer. Plays an important role in septal growth or maintenance. Mediates colony spore formation. The chain is Chitin synthase G from Aspergillus niger (strain ATCC MYA-4892 / CBS 513.88 / FGSC A1513).